Here is a 103-residue protein sequence, read N- to C-terminus: Histone H4 (103 aa).

Positions M1–G14 are enriched in gly residues. The segment at M1–R20 is disordered. Residue K6 is modified to N6-acetyl-N6-methyllysine; alternate. N6-methyllysine; alternate occurs at positions 6, 9, and 13. K13 is subject to N6-acetyl-N6-methyllysine; alternate. The DNA-binding element occupies K17 to K21. K92 is subject to N6-glutaryllysine.

Belongs to the histone H4 family. As to quaternary structure, the nucleosome is a histone octamer containing two molecules each of H2A, H2B, H3 and H4 assembled in one H3-H4 heterotetramer and two H2A-H2B heterodimers. The octamer wraps approximately 147 bp of DNA. Post-translationally, glutarylation at Lys-92 (H4K91glu) destabilizes nucleosomes by promoting dissociation of the H2A-H2B dimers from nucleosomes.

The protein localises to the nucleus. It localises to the chromosome. In terms of biological role, core component of nucleosome. Nucleosomes wrap and compact DNA into chromatin, limiting DNA accessibility to the cellular machineries which require DNA as a template. Histones thereby play a central role in transcription regulation, DNA repair, DNA replication and chromosomal stability. DNA accessibility is regulated via a complex set of post-translational modifications of histones, also called histone code, and nucleosome remodeling. The protein is Histone H4 (hH4-1) of Neurospora crassa (strain ATCC 24698 / 74-OR23-1A / CBS 708.71 / DSM 1257 / FGSC 987).